A 1301-amino-acid chain; its full sequence is Tyrosine-protein phosphatase 99A (1301 aa).

A signal peptide spans 1–28 (MPRPQHHALLRAMLKLLLFASIAEHCAT). Over 29 to 394 (ALPTNSSNSP…RQSHNDYNLA (366 aa)) the chain is Extracellular. Residues 31 to 63 (PTNSSNSPSSPSPFTVASLPPTTASSSSSPAVI) are disordered. N-linked (GlcNAc...) asparagine glycosylation occurs at Asn-33. The span at 33–63 (NSSNSPSSPSPFTVASLPPTTASSSSSPAVI) shows a compositional bias: low complexity. Fibronectin type-III domains are found at residues 66–165 (SSFD…YAAV), 173–269 (KPQN…TDVG), and 270–376 (GPSA…LQPN). N-linked (GlcNAc...) asparagine glycosylation is found at Asn-176, Asn-212, Asn-278, Asn-322, and Asn-336. A helical membrane pass occupies residues 395-415 (VLVGIIFSCFGIILIIMAFFL). Topologically, residues 416–1301 (WSRKCFHAAY…TDAQNLDIVG (886 aa)) are cytoplasmic. 2 consecutive Tyrosine-protein phosphatase domains span residues 476–741 (FSRE…LVEA) and 764–1016 (LEQQ…LSFL). Cys-682 (phosphocysteine intermediate) is an active-site residue. Positions 1092–1106 (TALNETVSTPSTDTN) are enriched in polar residues. Disordered regions lie at residues 1092-1199 (TALN…PTIP) and 1257-1281 (VGDL…NNHI). Over residues 1107–1130 (PSLLPILSLLPPTVAPLSSSSSTT) the composition is skewed to low complexity. Pro residues predominate over residues 1131–1142 (PPTPSTPTPQPP). Positions 1150–1161 (HSPSDLSHQISS) are enriched in polar residues. Low complexity predominate over residues 1162 to 1188 (TVANAASPVTPATASASAGATPTTPMT). Over residues 1264-1273 (NADNSPTASP) the composition is skewed to polar residues.

It belongs to the protein-tyrosine phosphatase family. Receptor class subfamily. Selectively expressed in a subset of axons and pioneer neurons (including aCC and RP2) in the embryo.

The protein resides in the membrane. It carries out the reaction O-phospho-L-tyrosyl-[protein] + H2O = L-tyrosyl-[protein] + phosphate. In terms of biological role, may play a key role in signal transduction and growth control. May have a role in the establishment of the intersegmental and segmental nerves. In Drosophila melanogaster (Fruit fly), this protein is Tyrosine-protein phosphatase 99A (Ptp99A).